Here is a 427-residue protein sequence, read N- to C-terminus: Glucose-6-phosphate isomerase (427 aa).

Catalysis depends on E277, which acts as the Proton donor. Residues H298 and K414 contribute to the active site.

Belongs to the GPI family.

Its subcellular location is the cytoplasm. It carries out the reaction alpha-D-glucose 6-phosphate = beta-D-fructose 6-phosphate. It functions in the pathway carbohydrate biosynthesis; gluconeogenesis. It participates in carbohydrate degradation; glycolysis; D-glyceraldehyde 3-phosphate and glycerone phosphate from D-glucose: step 2/4. In terms of biological role, catalyzes the reversible isomerization of glucose-6-phosphate to fructose-6-phosphate. This Mycoplasma capricolum subsp. capricolum (strain California kid / ATCC 27343 / NCTC 10154) protein is Glucose-6-phosphate isomerase.